The chain runs to 1378 residues: DNA-directed RNA polymerase subunit beta (1378 aa).

The protein belongs to the RNA polymerase beta chain family. As to quaternary structure, the RNAP catalytic core consists of 2 alpha, 1 beta, 1 beta' and 1 omega subunit. When a sigma factor is associated with the core the holoenzyme is formed, which can initiate transcription.

The catalysed reaction is RNA(n) + a ribonucleoside 5'-triphosphate = RNA(n+1) + diphosphate. Its function is as follows. DNA-dependent RNA polymerase catalyzes the transcription of DNA into RNA using the four ribonucleoside triphosphates as substrates. This is DNA-directed RNA polymerase subunit beta from Campylobacter jejuni (strain RM1221).